The chain runs to 299 residues: Homoserine kinase (299 aa).

88–98 (PLGRGLGSSAT) contacts ATP.

The protein belongs to the GHMP kinase family. Homoserine kinase subfamily.

It localises to the cytoplasm. The enzyme catalyses L-homoserine + ATP = O-phospho-L-homoserine + ADP + H(+). It participates in amino-acid biosynthesis; L-threonine biosynthesis; L-threonine from L-aspartate: step 4/5. In terms of biological role, catalyzes the ATP-dependent phosphorylation of L-homoserine to L-homoserine phosphate. This is Homoserine kinase from Gloeobacter violaceus (strain ATCC 29082 / PCC 7421).